The primary structure comprises 614 residues: UvrABC system protein C (614 aa).

Positions 19–97 (SLPGCYLWKN…IKKYNPKFNV (79 aa)) constitute a GIY-YIG domain. The region spanning 208-243 (ERLVADLKKAMMDASSKMEYERAGFLKQRIEKINQL) is the UVR domain.

This sequence belongs to the UvrC family. In terms of assembly, interacts with UvrB in an incision complex.

It localises to the cytoplasm. Its function is as follows. The UvrABC repair system catalyzes the recognition and processing of DNA lesions. UvrC both incises the 5' and 3' sides of the lesion. The N-terminal half is responsible for the 3' incision and the C-terminal half is responsible for the 5' incision. The polypeptide is UvrABC system protein C (Leptospira biflexa serovar Patoc (strain Patoc 1 / Ames)).